The sequence spans 323 residues: Peridinin-chlorophyll a-binding protein 3 (323 aa).

Repeat copies occupy residues 1-173 (DGIA…RYVP) and 174-323 (DGPV…SAVV).

As to quaternary structure, homotrimer.

It localises to the plastid. Its subcellular location is the chloroplast. Functionally, water-soluble antenna for capture of solar energy in the blue-green range. Peridinin is an asymmetric carotenoid. This chain is Peridinin-chlorophyll a-binding protein 3, found in Amphidinium carterae (Dinoflagellate).